Consider the following 245-residue polypeptide: Biosynthetic peptidoglycan transglycosylase (245 aa).

Residues 19–41 (CLRWVLAAPLLFAAASVLQVLFL) form a helical membrane-spanning segment.

This sequence belongs to the glycosyltransferase 51 family.

The protein resides in the cell inner membrane. It catalyses the reaction [GlcNAc-(1-&gt;4)-Mur2Ac(oyl-L-Ala-gamma-D-Glu-L-Lys-D-Ala-D-Ala)](n)-di-trans,octa-cis-undecaprenyl diphosphate + beta-D-GlcNAc-(1-&gt;4)-Mur2Ac(oyl-L-Ala-gamma-D-Glu-L-Lys-D-Ala-D-Ala)-di-trans,octa-cis-undecaprenyl diphosphate = [GlcNAc-(1-&gt;4)-Mur2Ac(oyl-L-Ala-gamma-D-Glu-L-Lys-D-Ala-D-Ala)](n+1)-di-trans,octa-cis-undecaprenyl diphosphate + di-trans,octa-cis-undecaprenyl diphosphate + H(+). It participates in cell wall biogenesis; peptidoglycan biosynthesis. Its function is as follows. Peptidoglycan polymerase that catalyzes glycan chain elongation from lipid-linked precursors. This chain is Biosynthetic peptidoglycan transglycosylase, found in Xanthomonas oryzae pv. oryzae (strain KACC10331 / KXO85).